The chain runs to 361 residues: NAD(P)H-quinone oxidoreductase subunit 1, chloroplastic (361 aa).

A run of 6 helical transmembrane segments spans residues 25–45, 102–122, 125–145, 246–266, 298–318, and 334–354; these read IWLLVPILTLVLGITIGVLVI, VAVVSILLSYSVIPFGYHLVL, LSIGVFLWIAISSIAPIGLLM, YSGIKFGLFYVASYLNLLVSS, VFGTTISLLITLAKAYLFLFI, and LLNLGWKSLLPIALGNLLLTT.

Belongs to the complex I subunit 1 family. As to quaternary structure, NDH is composed of at least 16 different subunits, 5 of which are encoded in the nucleus.

The protein localises to the plastid. Its subcellular location is the chloroplast thylakoid membrane. It carries out the reaction a plastoquinone + NADH + (n+1) H(+)(in) = a plastoquinol + NAD(+) + n H(+)(out). The catalysed reaction is a plastoquinone + NADPH + (n+1) H(+)(in) = a plastoquinol + NADP(+) + n H(+)(out). Its function is as follows. NDH shuttles electrons from NAD(P)H:plastoquinone, via FMN and iron-sulfur (Fe-S) centers, to quinones in the photosynthetic chain and possibly in a chloroplast respiratory chain. The immediate electron acceptor for the enzyme in this species is believed to be plastoquinone. Couples the redox reaction to proton translocation, and thus conserves the redox energy in a proton gradient. The sequence is that of NAD(P)H-quinone oxidoreductase subunit 1, chloroplastic from Nymphaea alba (White water-lily).